Reading from the N-terminus, the 458-residue chain is Argininosuccinate lyase (458 aa).

The protein belongs to the lyase 1 family. Argininosuccinate lyase subfamily.

It is found in the cytoplasm. The catalysed reaction is 2-(N(omega)-L-arginino)succinate = fumarate + L-arginine. It functions in the pathway amino-acid biosynthesis; L-arginine biosynthesis; L-arginine from L-ornithine and carbamoyl phosphate: step 3/3. This is Argininosuccinate lyase from Citrifermentans bemidjiense (strain ATCC BAA-1014 / DSM 16622 / JCM 12645 / Bem) (Geobacter bemidjiensis).